The following is a 573-amino-acid chain: WRKY transcription factor SUSIBA2 (573 aa).

2 disordered regions span residues 56–133 (AHPD…CSRE) and 157–192 (PAEVGTSEPQQMNSSDNAMQEPQSENVADKSADDGY). The segment covering 64 to 85 (PRDKSVRNAHEDRGSRDFEFKP) has biased composition (basic and acidic residues). A compositionally biased stretch (low complexity) spans 108 to 122 (MQNQSMNPSSSSSNM). A compositionally biased stretch (polar residues) spans 163 to 182 (SEPQQMNSSDNAMQEPQSEN). The span at 183 to 192 (VADKSADDGY) shows a compositional bias: basic and acidic residues. Residues 183–247 (VADKSADDGY…YKGRHNHPKP (65 aa)) constitute a DNA-binding region (WRKY 1). Zn(2+)-binding residues include cysteine 214, cysteine 219, histidine 242, and histidine 244. The disordered stretch occupies residues 240–332 (GRHNHPKPQP…EDLESKRRKM (93 aa)). Over residues 263 to 277 (GEERYDGASAADDKS) the composition is skewed to basic and acidic residues. The WRKY 2 DNA-binding region spans 357 to 422 (SEVDILDDGY…YEGKHNHEVP (66 aa)). Zn(2+) is bound by residues cysteine 388, cysteine 393, histidine 417, and histidine 419.

This sequence belongs to the WRKY group I family. As to expression, expressed in endosperm, but not in leaves.

Its subcellular location is the nucleus. In terms of biological role, transcription factor involved in starch synthesis. Acts as a transcriptional activator in sugar signaling. Interacts specifically with the SURE and W-box elements, but not with the SP8a element. The polypeptide is WRKY transcription factor SUSIBA2 (Hordeum vulgare (Barley)).